Here is a 172-residue protein sequence, read N- to C-terminus: Odorant-binding protein (172 aa).

Residues 1-15 (MVKFLLIVLALGVSC) form the signal peptide. Cystine bridges form between cysteine 60/cysteine 64 and cysteine 79/cysteine 170.

This sequence belongs to the calycin superfamily. Lipocalin family. As to quaternary structure, homodimer.

The protein resides in the secreted. Its function is as follows. This protein is found in nasal epithelium and it binds a wide variety of chemical odorants. The protein is Odorant-binding protein (Obp1f) of Rattus norvegicus (Rat).